The chain runs to 305 residues: FMRFamide-related peptides type HF-4 (305 aa).

Positions 1–19 (MTSLCLTIAPAVLSLICLS) are cleaved as a signal peptide. Phenylalanine amide occurs at positions 36, 47, and 66. Isoleucine 75 is subject to Isoleucine amide. A phenylalanine amide mark is found at phenylalanine 84 and phenylalanine 93. At isoleucine 102 the chain carries Isoleucine amide. 7 positions are modified to phenylalanine amide: phenylalanine 111, phenylalanine 120, phenylalanine 129, phenylalanine 138, phenylalanine 147, phenylalanine 156, and phenylalanine 165. The propeptide occupies 168–305 (SVDGEIEAGV…EHKQEYMRFG (138 aa)).

Belongs to the FARP (FMRFamide related peptide) family. Central nervous system.

The protein localises to the secreted. In terms of biological role, can function as both cardioregulatory hormones and transmitters and may regulate cardiovascular function. The protein is FMRFamide-related peptides type HF-4 of Cornu aspersum (Brown garden snail).